The following is a 129-amino-acid chain: Small ribosomal subunit protein uS11 (129 aa).

The protein belongs to the universal ribosomal protein uS11 family. Part of the 30S ribosomal subunit. Interacts with proteins S7 and S18. Binds to IF-3.

Located on the platform of the 30S subunit, it bridges several disparate RNA helices of the 16S rRNA. Forms part of the Shine-Dalgarno cleft in the 70S ribosome. This is Small ribosomal subunit protein uS11 from Cereibacter sphaeroides (strain ATCC 17029 / ATH 2.4.9) (Rhodobacter sphaeroides).